The primary structure comprises 1791 residues: Protein TIC 214 (1791 aa).

The next 6 membrane-spanning stretches (helical) occupy residues isoleucine 19 to glycine 39, phenylalanine 68 to leucine 88, proline 91 to histidine 111, valine 133 to leucine 153, valine 176 to isoleucine 196, and isoleucine 227 to isoleucine 247. The tract at residues alanine 1492–leucine 1511 is disordered. The span at glutamate 1498–leucine 1511 shows a compositional bias: basic and acidic residues.

It belongs to the TIC214 family. As to quaternary structure, part of the Tic complex.

The protein localises to the plastid. It is found in the chloroplast inner membrane. In terms of biological role, involved in protein precursor import into chloroplasts. May be part of an intermediate translocation complex acting as a protein-conducting channel at the inner envelope. In Barbarea verna (Land cress), this protein is Protein TIC 214.